The sequence spans 308 residues: Glycine--tRNA ligase alpha subunit (308 aa).

The protein belongs to the class-II aminoacyl-tRNA synthetase family. Tetramer of two alpha and two beta subunits.

It is found in the cytoplasm. It catalyses the reaction tRNA(Gly) + glycine + ATP = glycyl-tRNA(Gly) + AMP + diphosphate. This chain is Glycine--tRNA ligase alpha subunit, found in Streptococcus pyogenes serotype M3 (strain SSI-1).